Consider the following 251-residue polypeptide: Phosphate import ATP-binding protein PstB (251 aa).

An ABC transporter domain is found at 5–246; that stretch reads FDIRNFSVYY…PEKELTEKYL (242 aa). Residue 37-44 coordinates ATP; sequence GPSGCGKS.

This sequence belongs to the ABC transporter superfamily. Phosphate importer (TC 3.A.1.7) family. The complex is composed of two ATP-binding proteins (PstB), two transmembrane proteins (PstC and PstA) and a solute-binding protein (PstS).

The protein localises to the cell membrane. The enzyme catalyses phosphate(out) + ATP + H2O = ADP + 2 phosphate(in) + H(+). Its function is as follows. Part of the ABC transporter complex PstSACB involved in phosphate import. Responsible for energy coupling to the transport system. This is Phosphate import ATP-binding protein PstB from Archaeoglobus fulgidus (strain ATCC 49558 / DSM 4304 / JCM 9628 / NBRC 100126 / VC-16).